The primary structure comprises 289 residues: Elongation factor Ts (289 aa).

Residues 82–85 form an involved in Mg(2+) ion dislocation from EF-Tu region; that stretch reads TDFV.

It belongs to the EF-Ts family.

The protein resides in the cytoplasm. In terms of biological role, associates with the EF-Tu.GDP complex and induces the exchange of GDP to GTP. It remains bound to the aminoacyl-tRNA.EF-Tu.GTP complex up to the GTP hydrolysis stage on the ribosome. This chain is Elongation factor Ts, found in Chloroherpeton thalassium (strain ATCC 35110 / GB-78).